A 340-amino-acid chain; its full sequence is Glycerol-3-phosphate dehydrogenase [NAD(P)+] (340 aa).

Ser-13, Tyr-14, and Lys-108 together coordinate NADPH. Sn-glycerol 3-phosphate contacts are provided by Lys-108, Gly-137, and Thr-139. Ala-141 contacts NADPH. Sn-glycerol 3-phosphate contacts are provided by Lys-193, Asp-246, Ser-256, Arg-257, and Asn-258. Lys-193 acts as the Proton acceptor in catalysis. Arg-257 serves as a coordination point for NADPH. Ile-281 and Glu-283 together coordinate NADPH.

This sequence belongs to the NAD-dependent glycerol-3-phosphate dehydrogenase family.

The protein localises to the cytoplasm. The catalysed reaction is sn-glycerol 3-phosphate + NAD(+) = dihydroxyacetone phosphate + NADH + H(+). It catalyses the reaction sn-glycerol 3-phosphate + NADP(+) = dihydroxyacetone phosphate + NADPH + H(+). Its pathway is membrane lipid metabolism; glycerophospholipid metabolism. Functionally, catalyzes the reduction of the glycolytic intermediate dihydroxyacetone phosphate (DHAP) to sn-glycerol 3-phosphate (G3P), the key precursor for phospholipid synthesis. In Bartonella henselae (strain ATCC 49882 / DSM 28221 / CCUG 30454 / Houston 1) (Rochalimaea henselae), this protein is Glycerol-3-phosphate dehydrogenase [NAD(P)+].